The chain runs to 216 residues: Flagellin B2 (216 aa).

Positions 1 to 12 (MKIKEFMSNKKG) are excised as a propeptide. Asn-38, Asn-72, Asn-77, Asn-113, Asn-172, and Asn-208 each carry an N-linked (GlcNAc...) asparagine glycan.

Belongs to the archaeal flagellin family. In terms of processing, N-linked glycans consist of the 779 Da trisaccharide beta-ManNAc(Thr)-(1-4)-beta-GlcNAc3NAcA-(1-3)-beta-GlcNAc.

The protein resides in the archaeal flagellum. Its function is as follows. Flagellin is the subunit protein which polymerizes to form the filaments of archaeal flagella. The sequence is that of Flagellin B2 (flaB2) from Methanococcus voltae.